Consider the following 76-residue polypeptide: Small ribosomal subunit protein bS18 (76 aa).

This sequence belongs to the bacterial ribosomal protein bS18 family. As to quaternary structure, part of the 30S ribosomal subunit. Forms a tight heterodimer with protein bS6.

Its function is as follows. Binds as a heterodimer with protein bS6 to the central domain of the 16S rRNA, where it helps stabilize the platform of the 30S subunit. This is Small ribosomal subunit protein bS18 from Ectopseudomonas mendocina (strain ymp) (Pseudomonas mendocina).